Consider the following 430-residue polypeptide: 3-phosphoshikimate 1-carboxyvinyltransferase (430 aa).

3-phosphoshikimate contacts are provided by K23, S24, and R28. A phosphoenolpyruvate-binding site is contributed by K23. Residues G93 and R121 each coordinate phosphoenolpyruvate. Residues S166, Q168, D313, and K340 each coordinate 3-phosphoshikimate. Q168 contributes to the phosphoenolpyruvate binding site. The active-site Proton acceptor is D313. Residues R344 and R386 each coordinate phosphoenolpyruvate.

This sequence belongs to the EPSP synthase family. As to quaternary structure, monomer.

The protein localises to the cytoplasm. It carries out the reaction 3-phosphoshikimate + phosphoenolpyruvate = 5-O-(1-carboxyvinyl)-3-phosphoshikimate + phosphate. It functions in the pathway metabolic intermediate biosynthesis; chorismate biosynthesis; chorismate from D-erythrose 4-phosphate and phosphoenolpyruvate: step 6/7. Its function is as follows. Catalyzes the transfer of the enolpyruvyl moiety of phosphoenolpyruvate (PEP) to the 5-hydroxyl of shikimate-3-phosphate (S3P) to produce enolpyruvyl shikimate-3-phosphate and inorganic phosphate. This is 3-phosphoshikimate 1-carboxyvinyltransferase from Anaeromyxobacter sp. (strain Fw109-5).